The chain runs to 295 residues: Pantothenate synthetase (295 aa).

Position 30–37 (Met-30–His-37) interacts with ATP. His-37 functions as the Proton donor in the catalytic mechanism. Gln-61 provides a ligand contact to (R)-pantoate. Gln-61 lines the beta-alanine pocket. Residue Gly-149–Asp-152 participates in ATP binding. Gln-155 lines the (R)-pantoate pocket. Residues Val-178 and Met-186–Arg-189 contribute to the ATP site.

It belongs to the pantothenate synthetase family. In terms of assembly, homodimer.

It is found in the cytoplasm. It catalyses the reaction (R)-pantoate + beta-alanine + ATP = (R)-pantothenate + AMP + diphosphate + H(+). Its pathway is cofactor biosynthesis; (R)-pantothenate biosynthesis; (R)-pantothenate from (R)-pantoate and beta-alanine: step 1/1. Its function is as follows. Catalyzes the condensation of pantoate with beta-alanine in an ATP-dependent reaction via a pantoyl-adenylate intermediate. This chain is Pantothenate synthetase, found in Photobacterium profundum (strain SS9).